The primary structure comprises 149 residues: Large ribosomal subunit protein bL9 (149 aa).

This sequence belongs to the bacterial ribosomal protein bL9 family.

Functionally, binds to the 23S rRNA. This is Large ribosomal subunit protein bL9 from Fusobacterium nucleatum subsp. nucleatum (strain ATCC 25586 / DSM 15643 / BCRC 10681 / CIP 101130 / JCM 8532 / KCTC 2640 / LMG 13131 / VPI 4355).